The primary structure comprises 335 residues: Aspartate carbamoyltransferase catalytic subunit (335 aa).

The carbamoyl phosphate site is built by R54 and T55. K82 serves as a coordination point for L-aspartate. R104, H134, and Q137 together coordinate carbamoyl phosphate. 2 residues coordinate L-aspartate: R177 and R232. G277 and P278 together coordinate carbamoyl phosphate.

Belongs to the aspartate/ornithine carbamoyltransferase superfamily. ATCase family. As to quaternary structure, heterododecamer (2C3:3R2) of six catalytic PyrB chains organized as two trimers (C3), and six regulatory PyrI chains organized as three dimers (R2).

It carries out the reaction carbamoyl phosphate + L-aspartate = N-carbamoyl-L-aspartate + phosphate + H(+). The protein operates within pyrimidine metabolism; UMP biosynthesis via de novo pathway; (S)-dihydroorotate from bicarbonate: step 2/3. Its function is as follows. Catalyzes the condensation of carbamoyl phosphate and aspartate to form carbamoyl aspartate and inorganic phosphate, the committed step in the de novo pyrimidine nucleotide biosynthesis pathway. This is Aspartate carbamoyltransferase catalytic subunit from Paenarthrobacter aurescens (strain TC1).